Here is a 446-residue protein sequence, read N- to C-terminus: Tubulin beta-1 chain (446 aa).

GTP is bound by residues glutamine 11, glutamate 69, serine 138, glycine 142, threonine 143, glycine 144, asparagine 204, and asparagine 226. Position 69 (glutamate 69) interacts with Mg(2+).

The protein belongs to the tubulin family. In terms of assembly, dimer of alpha and beta chains. A typical microtubule is a hollow water-filled tube with an outer diameter of 25 nm and an inner diameter of 15 nM. Alpha-beta heterodimers associate head-to-tail to form protofilaments running lengthwise along the microtubule wall with the beta-tubulin subunit facing the microtubule plus end conferring a structural polarity. Microtubules usually have 13 protofilaments but different protofilament numbers can be found in some organisms and specialized cells. Mg(2+) is required as a cofactor.

It is found in the cytoplasm. The protein localises to the cytoskeleton. In terms of biological role, tubulin is the major constituent of microtubules, a cylinder consisting of laterally associated linear protofilaments composed of alpha- and beta-tubulin heterodimers. Microtubules grow by the addition of GTP-tubulin dimers to the microtubule end, where a stabilizing cap forms. Below the cap, tubulin dimers are in GDP-bound state, owing to GTPase activity of alpha-tubulin. The sequence is that of Tubulin beta-1 chain (TUBB1) from Suillus bovinus (Jersey cow bolete).